Reading from the N-terminus, the 397-residue chain is Glia-derived nexin (397 aa).

The signal sequence occupies residues 1–19 (MNWHFPFFILTTVTLYSVH). N-linked (GlcNAc...) asparagine glycosylation occurs at Asn-159.

Belongs to the serpin family. As to expression, most abundant in seminal vesicles.

It is found in the secreted. It localises to the extracellular space. Functionally, serine protease inhibitor with activity toward thrombin, trypsin, and urokinase. Promotes neurite extension by inhibiting thrombin. Binds heparin. The sequence is that of Glia-derived nexin (Serpine2) from Mus musculus (Mouse).